A 539-amino-acid chain; its full sequence is CTP synthase (539 aa).

An amidoligase domain region spans residues 1–268 (MSFKSIFLTG…SDFLLNKLGF (268 aa)). Ser14 serves as a coordination point for CTP. Ser14 is a UTP binding site. Position 15–20 (15–20 (SLGKGL)) interacts with ATP. Position 55 (Tyr55) interacts with L-glutamine. Asp72 contacts ATP. Mg(2+) contacts are provided by Asp72 and Glu142. CTP is bound by residues 149–151 (DIE), 188–193 (KTKPTQ), and Lys224. Residues 188-193 (KTKPTQ) and Lys224 contribute to the UTP site. Positions 294 to 532 (RIGLVGKYLE…IRAAKAYSLE (239 aa)) constitute a Glutamine amidotransferase type-1 domain. Gly353 provides a ligand contact to L-glutamine. Cys380 serves as the catalytic Nucleophile; for glutamine hydrolysis. Residues 381–384 (LGMQ), Glu404, and Arg460 each bind L-glutamine. Residues His505 and Glu507 contribute to the active site.

Belongs to the CTP synthase family. As to quaternary structure, homotetramer.

It catalyses the reaction UTP + L-glutamine + ATP + H2O = CTP + L-glutamate + ADP + phosphate + 2 H(+). It carries out the reaction L-glutamine + H2O = L-glutamate + NH4(+). The catalysed reaction is UTP + NH4(+) + ATP = CTP + ADP + phosphate + 2 H(+). It participates in pyrimidine metabolism; CTP biosynthesis via de novo pathway; CTP from UDP: step 2/2. Allosterically activated by GTP, when glutamine is the substrate; GTP has no effect on the reaction when ammonia is the substrate. The allosteric effector GTP functions by stabilizing the protein conformation that binds the tetrahedral intermediate(s) formed during glutamine hydrolysis. Inhibited by the product CTP, via allosteric rather than competitive inhibition. Catalyzes the ATP-dependent amination of UTP to CTP with either L-glutamine or ammonia as the source of nitrogen. Regulates intracellular CTP levels through interactions with the four ribonucleotide triphosphates. This is CTP synthase from Chlamydia trachomatis serovar A (strain ATCC VR-571B / DSM 19440 / HAR-13).